A 580-amino-acid polypeptide reads, in one-letter code: Protein O-linked-mannose beta-1,4-N-acetylglucosaminyltransferase 2 (580 aa).

Residues 1-4 (MHLS) are Cytoplasmic-facing. A helical; Signal-anchor for type II membrane protein transmembrane segment spans residues 5–25 (AVFNALLVSVLAAVLWKHVRL). At 26–580 (REHAATLEEE…PFADVLVCNT (555 aa)) the chain is on the lumenal side. N-linked (GlcNAc...) asparagine glycosylation is found at Asn99 and Asn276. The 93-residue stretch at 488-580 (ARCQASVHGA…PFADVLVCNT (93 aa)) folds into the Fibronectin type-III domain.

It belongs to the glycosyltransferase 61 family. Highly expressed in the brain, muscle, heart, and kidney in both fetus and adult. In the brain, highest expression in the cortex and cerebellum. Highly expressed in the pancreas.

It localises to the endoplasmic reticulum membrane. It carries out the reaction 3-O-(alpha-D-mannosyl)-L-threonyl-[protein] + UDP-N-acetyl-alpha-D-glucosamine = 3-O-(N-acetyl-beta-D-glucosaminyl-(1-&gt;4)-alpha-D-mannosyl)-L-threonyl-[protein] + UDP + H(+). It functions in the pathway protein modification; protein glycosylation. Its function is as follows. O-linked mannose beta-1,4-N-acetylglucosaminyltransferase that transfers UDP-N-acetyl-D-glucosamine to the 4-position of the mannose to generate N-acetyl-D-glucosamine-beta-1,4-O-D-mannosylprotein. Involved in the biosynthesis of the phosphorylated O-mannosyl trisaccharide (N-acetylgalactosamine-beta-3-N-acetylglucosamine-beta-4-(phosphate-6-)mannose), a carbohydrate structure present in alpha-dystroglycan (DAG1), which is required for binding laminin G-like domain-containing extracellular proteins with high affinity. The sequence is that of Protein O-linked-mannose beta-1,4-N-acetylglucosaminyltransferase 2 (POMGNT2) from Homo sapiens (Human).